A 454-amino-acid polypeptide reads, in one-letter code: uncharacterized protein (454 aa).

Residues 1-45 (MAAEGKAIAKVNDLVIFVPYVVPGDVVDLQIKRKKNKYAEAEAVK) enclose the TRAM domain. Cys-58, Cys-64, Cys-67, and Cys-160 together coordinate [4Fe-4S] cluster. S-adenosyl-L-methionine is bound by residues Gln-286, Tyr-315, Glu-336, and Asp-385. Cys-412 functions as the Nucleophile in the catalytic mechanism.

The protein belongs to the class I-like SAM-binding methyltransferase superfamily. RNA M5U methyltransferase family.

This is an uncharacterized protein from Bacteroides thetaiotaomicron (strain ATCC 29148 / DSM 2079 / JCM 5827 / CCUG 10774 / NCTC 10582 / VPI-5482 / E50).